The primary structure comprises 88 residues: UPF0250 protein swp_3927 (88 aa).

It belongs to the UPF0250 family.

The polypeptide is UPF0250 protein swp_3927 (Shewanella piezotolerans (strain WP3 / JCM 13877)).